Here is a 444-residue protein sequence, read N- to C-terminus: Ribosomal protein uS12 methylthiotransferase RimO (444 aa).

Positions 4 to 118 (YKIGLISLGC…IQNYIDDFFN (115 aa)) constitute an MTTase N-terminal domain. 6 residues coordinate [4Fe-4S] cluster: Cys13, Cys48, Cys81, Cys155, Cys159, and Cys162. The region spanning 141 to 371 (TTAKHMAYIR…MSIQQNVSSK (231 aa)) is the Radical SAM core domain. In terms of domain architecture, TRAM spans 374 to 440 (KNKLEKVYKV…EYDLIGVVCD (67 aa)).

Belongs to the methylthiotransferase family. RimO subfamily. Requires [4Fe-4S] cluster as cofactor.

It localises to the cytoplasm. It carries out the reaction L-aspartate(89)-[ribosomal protein uS12]-hydrogen + (sulfur carrier)-SH + AH2 + 2 S-adenosyl-L-methionine = 3-methylsulfanyl-L-aspartate(89)-[ribosomal protein uS12]-hydrogen + (sulfur carrier)-H + 5'-deoxyadenosine + L-methionine + A + S-adenosyl-L-homocysteine + 2 H(+). Its function is as follows. Catalyzes the methylthiolation of an aspartic acid residue of ribosomal protein uS12. The chain is Ribosomal protein uS12 methylthiotransferase RimO from Clostridium novyi (strain NT).